Here is a 269-residue protein sequence, read N- to C-terminus: Senescence-associated protein 13 (269 aa).

An NADP(+)-binding site is contributed by 21 to 45 (LVTGGSKGIGEAVVEELAMLGAKVH). Residue Ser-154 participates in substrate binding. Tyr-167 functions as the Proton acceptor in the catalytic mechanism.

Belongs to the short-chain dehydrogenases/reductases (SDR) family. SDR65C subfamily.

Functionally, unspecific reductase providing both diastereomeric alcohols from the prochiral ketones. Active on cyclic monoterpenes and small flexible lipophilic carbonyls. No activity with tropinone, nitrogen-containing tropinone analogs, tropine or pseudotropine as substrate. This chain is Senescence-associated protein 13, found in Arabidopsis thaliana (Mouse-ear cress).